Consider the following 510-residue polypeptide: ATP synthase subunit alpha, mitochondrial (510 aa).

Glycine 171 to threonine 178 is a binding site for ATP.

It belongs to the ATPase alpha/beta chains family. F-type ATPases have 2 components, CF(1) - the catalytic core - and CF(0) - the membrane proton channel. CF(1) has five subunits: alpha(3), beta(3), gamma(1), delta(1), epsilon(1). CF(0) has three main subunits: a, b and c.

Its subcellular location is the mitochondrion. It localises to the mitochondrion inner membrane. Functionally, mitochondrial membrane ATP synthase (F(1)F(0) ATP synthase or Complex V) produces ATP from ADP in the presence of a proton gradient across the membrane which is generated by electron transport complexes of the respiratory chain. F-type ATPases consist of two structural domains, F(1) - containing the extramembraneous catalytic core, and F(0) - containing the membrane proton channel, linked together by a central stalk and a peripheral stalk. During catalysis, ATP synthesis in the catalytic domain of F(1) is coupled via a rotary mechanism of the central stalk subunits to proton translocation. Subunits alpha and beta form the catalytic core in F(1). Rotation of the central stalk against the surrounding alpha(3)beta(3) subunits leads to hydrolysis of ATP in three separate catalytic sites on the beta subunits. Subunit alpha does not bear the catalytic high-affinity ATP-binding sites. The protein is ATP synthase subunit alpha, mitochondrial (ATPA) of Helianthus annuus (Common sunflower).